A 76-amino-acid polypeptide reads, in one-letter code: Sec-independent protein translocase protein TatA (76 aa).

A helical membrane pass occupies residues 1-21; it reads MGGISIWQLLIIALIVVLLFG. The interval 43-76 is disordered; that stretch reads MSSEDEKKAIEDTSAEKTAQTEEKKTESKDKEQA. Over residues 46–76 the composition is skewed to basic and acidic residues; it reads EDEKKAIEDTSAEKTAQTEEKKTESKDKEQA.

The protein belongs to the TatA/E family. In terms of assembly, the Tat system comprises two distinct complexes: a TatABC complex, containing multiple copies of TatA, TatB and TatC subunits, and a separate TatA complex, containing only TatA subunits. Substrates initially bind to the TatABC complex, which probably triggers association of the separate TatA complex to form the active translocon.

It is found in the cell inner membrane. Its function is as follows. Part of the twin-arginine translocation (Tat) system that transports large folded proteins containing a characteristic twin-arginine motif in their signal peptide across membranes. TatA could form the protein-conducting channel of the Tat system. This Shewanella loihica (strain ATCC BAA-1088 / PV-4) protein is Sec-independent protein translocase protein TatA.